A 494-amino-acid polypeptide reads, in one-letter code: Integrin beta-like protein 1 (494 aa).

The first 23 residues, 1-23 (MRPPGFRNFLLLASSLLFAGLSA), serve as a signal peptide directing secretion. Disulfide bonds link C40/C71, C51/C69, C63/C74, C76/C89, C91/C112, C96/C110, C104/C115, C117/C126, C132/C159, C143/C157, C151/C162, C164/C178, C180/C202, C185/C200, C194/C205, C207/C216, C220/C247, C231/C245, C239/C250, C252/C269, C271/C296, C276/C294, C288/C299, C301/C310, C316/C343, C327/C341, C335/C346, C348/C361, C363/C384, C368/C382, C376/C387, C389/C398, C404/C431, C415/C429, C423/C434, C436/C448, C450/C471, C455/C469, C463/C474, and C476/C485. I-EGF domains lie at 40 to 90 (CRLS…PLCE), 91 to 127 (CHEW…DACQ), 132 to 179 (CDLT…KFCE), 180 to 217 (CDDR…DKCE), 220 to 270 (CDIT…DTCE), 271 to 311 (CDER…KKCE), 316 to 362 (CTLS…KTCE), 363 to 399 (CDDR…KLCQ), 404 to 449 (CNMT…EFCD), and 450 to 486 (CDDR…NACE). One copy of the I repeat lies at 51–95 (CRAPGQPPGAALCHGRGRCDCGVCICHVTEPGMFFGPLCECHEWV). The segment at 51 to 494 (CRAPGQPPGA…CEIWLGSEYP (444 aa)) is cysteine-rich tandem repeats. The stretch at 96–142 (CETYDGSTCAGHGKCDCGKCKCDQGWYGDACQYPTNCDLTKKKSNQM) is one II repeat. An III repeat occupies 143-184 (CKNSQDIICSNAGTCHCGRCKCDNSDGSGLVYGKFCECDDRE). Residues 185–230 (CIDDETEEICGGHGKCYCGNCYCKAGWHGDKCEFQCDITPWESKRR) form an IV repeat. One copy of the V repeat lies at 231 to 275 (CTSPDGKICSNRGTCVCGECTCHDVDPTGDWGDIHGDTCECDERD). A VI repeat occupies 276–326 (CRAVYDRYSDDFCSGHGQCNCGRCDCKAGWYGKKCEHPQSCTLSAEESIRK). One copy of the VII repeat lies at 327–367 (CQGSSDLPCSGRGKCECGKCTCYPPGDRRVYGKTCECDDRR). Residues 368–414 (CEDLDGVVCGGHGTCSCGRCVCERGWFGKLCQHPRKCNMTEEQSKNL) form a VIII repeat. A glycan (N-linked (GlcNAc...) asparagine) is linked at N405. The stretch at 415-454 (CESADGILCSGKGSCHCGKCICSAEEWYISGEFCDCDDRD) is one IX repeat. Residues 455–494 (CDKHDGLICTGNGICSCGNCECWDGWNGNACEIWLGSEYP) form a X repeat.

In terms of tissue distribution, widely expressed in many tissues, but readily detectable only in aorta.

It localises to the secreted. The polypeptide is Integrin beta-like protein 1 (ITGBL1) (Homo sapiens (Human)).